Consider the following 283-residue polypeptide: MAGSNILHKIKLKAGFCGSAPDMGRGKSKMWKNITHGFHCVKGKSSHPMEDYVVSEFKKLEGHELGLFAIFDGHLGHDVAKYLQTNLFDNILKEKDFWTDTENAIRNAYRSTDAVILQQSLKLGKGGSTAVTGILIDGKKLVVANVGDSRAVMSKNGVAHQLSVDHEPSKEKKEIESRGGFVSNIPGDVPRVDGQLAVARAFGDKSLKLHLSSEPDITHQTIDDHTEFILFASDGIWKVLSNQEAVDAIKSIKDPHAAAKHLIEEAISRKSKDDISCIVVKFH.

The PPM-type phosphatase domain occupies 35 to 282 (THGFHCVKGK…DDISCIVVKF (248 aa)). Asp72, Gly73, Asp234, and Asp273 together coordinate Mn(2+).

It belongs to the PP2C family. Requires Mg(2+) as cofactor. Mn(2+) is required as a cofactor.

The enzyme catalyses O-phospho-L-seryl-[protein] + H2O = L-seryl-[protein] + phosphate. The catalysed reaction is O-phospho-L-threonyl-[protein] + H2O = L-threonyl-[protein] + phosphate. This chain is Probable protein phosphatase 2C 58, found in Arabidopsis thaliana (Mouse-ear cress).